The following is a 312-amino-acid chain: Glycine--tRNA ligase alpha subunit (312 aa).

The protein belongs to the class-II aminoacyl-tRNA synthetase family. Tetramer of two alpha and two beta subunits.

It localises to the cytoplasm. It carries out the reaction tRNA(Gly) + glycine + ATP = glycyl-tRNA(Gly) + AMP + diphosphate. This chain is Glycine--tRNA ligase alpha subunit, found in Delftia acidovorans (strain DSM 14801 / SPH-1).